The primary structure comprises 174 residues: Balbiani ring protein 1 (174 aa).

The tract at residues 28–174 (KCRCTSAGKP…RPEGCGSAMR (147 aa)) is disordered. Tandem repeats lie at residues 42-52 (EPSKGSKPRPE), 53-63 (KPSKGSKPRPE), 64-74 (KPSKGSKPKPE), 75-85 (KPSKGSKPRPE), 124-134 (EPSKGSKPRPE), 135-145 (KPSKESKPRPE), 146-156 (KPSKGSKPRPE), and 157-167 (KPSKGSKPRPE). 2 4 X 11 AA tandem repeats regions span residues 42 to 85 (EPSK…PRPE) and 124 to 167 (EPSK…PRPE). Composition is skewed to basic and acidic residues over residues 49–100 (PRPE…EKCA) and 121–159 (RKSE…EKPS).

Salivary gland.

The protein resides in the secreted. Used by the larvae to construct a supramolecular structure, the larval tube. The sequence is that of Balbiani ring protein 1 (BR1) from Chironomus tentans (Midge).